Reading from the N-terminus, the 979-residue chain is MSIKLFSLAKELNVGVGSLAGFLRKKGFDVEDNNPNVRIENEEFDLLLTEFGKSLPKGEAERIRKKFVKQKQGTPASAPSAKEETAGMAAKEAQVIATEVPQDMRPRFTIKGKVETEKPAEPVPSPKDKEPDTVREDKPARETAPVKEETKVVPVKEDKPKEEKPKQEEPKREEPKPEEPVQAAPVAKPVEKPVDKPQQPVMTQKPQEAETPPPAQEMEKKEDTEEVFRLKTNTQEPQVKVVGKIDLSSINSSTRPKKKTKEDRQREQNDADGKKKRKRINKAAVDVKKEAAKVSGEQGKRNAGGGNHSSGNKNNNRPAQQQSNASGGRKNNKRQSLPPKVEISDEDVQRQVKETLARLTTKKTSTTLGRGAKYRKDKRDAASRAAQDAMELNSEEQHTLKLTEFVTVSDLSNMMDVPVNEVIATCMSIGMMVGINQRLDAETINIVAEEFGFKTEFVSADLVEAIAPEEDNEEDLVARPPIVTVMGHVDHGKTSLLDRIRNTNVIEGEAGGITQHIGAYGLKLPSGRRITFLDTPGHEAFTAMRARGAKITDIAIIIVAADDDVMPQTVEAINHASAAGVPMVFAINKIDKPAANPERIKEQLANMNYLVEDWGGKYQSQEISAKKGINITELLEKVLLEADILELKANPNRRAIGSIIESSLDKGRGYVSTVMVQNGTLNMGDVVLAGTCHGRIKAMFNERNQRVKQAGPSEPVLILGLNGAPAAGDTFNVLETEQEAREIANRREQLQREQGLRTHKILTLEDISRRRAIGNFQELNLIVKGDVDGSVEALSDSLIRLSTEEIQVNVIHKAVGQISESDVVLAAASSAIIIGFQVRPSVAARKQAETDGVEIRTYSIIYDTIEDIKSAMEGMLSPEIREEVTGSLEVLQTFKISKVGTIAGCMVKEGKVKRTSKVRLIRDGIVIHTGELGSLKRFKDDAKEVVAGLECGLNLAHSNDIQDGDIIEAFDEIEIKKTL.

Residues 68-386 (VKQKQGTPAS…DKRDAASRAA (319 aa)) are disordered. Composition is skewed to basic and acidic residues over residues 102 to 179 (QDMR…KPEE), 217 to 229 (EMEK…EVFR), and 260 to 273 (TKED…DADG). Residues 317 to 326 (RPAQQQSNAS) show a composition bias toward polar residues. The span at 347-356 (DVQRQVKETL) shows a compositional bias: basic and acidic residues. The 169-residue stretch at 478–646 (ARPPIVTVMG…KVLLEADILE (169 aa)) folds into the tr-type G domain. Positions 487 to 494 (GHVDHGKT) are G1. A GTP-binding site is contributed by 487–494 (GHVDHGKT). Residues 512–516 (GITQH) are G2. The tract at residues 534 to 537 (DTPG) is G3. GTP-binding positions include 534–538 (DTPGH) and 588–591 (NKID). Residues 588-591 (NKID) are G4. The interval 624-626 (SAK) is G5.

This sequence belongs to the TRAFAC class translation factor GTPase superfamily. Classic translation factor GTPase family. IF-2 subfamily.

It is found in the cytoplasm. Functionally, one of the essential components for the initiation of protein synthesis. Protects formylmethionyl-tRNA from spontaneous hydrolysis and promotes its binding to the 30S ribosomal subunits. Also involved in the hydrolysis of GTP during the formation of the 70S ribosomal complex. The polypeptide is Translation initiation factor IF-2 (Porphyromonas gingivalis (strain ATCC BAA-308 / W83)).